Here is a 132-residue protein sequence, read N- to C-terminus: Fatty acid-binding protein, intestinal (132 aa).

The residue at position 2 (Ala2) is an N-acetylalanine. Residues Trp83 and Arg107 each contribute to the hexadecanoate site. Residues Trp83 and Arg107 each coordinate tetradecanoate.

The protein belongs to the calycin superfamily. Fatty-acid binding protein (FABP) family.

It localises to the cytoplasm. In terms of biological role, FABPs are thought to play a role in the intracellular transport of long-chain fatty acids and their acyl-CoA esters. FABP2 is probably involved in triglyceride-rich lipoprotein synthesis. Binds saturated long-chain fatty acids with a high affinity, but binds with a lower affinity to unsaturated long-chain fatty acids. FABP2 may also help maintain energy homeostasis by functioning as a lipid sensor. The polypeptide is Fatty acid-binding protein, intestinal (FABP2) (Bos taurus (Bovine)).